Consider the following 267-residue polypeptide: Soluble interferon gamma receptor OPG193 (267 aa).

Residues 1–17 (MRYIIILAVLFINSIHA) form the signal peptide. Asn-42 and Asn-150 each carry an N-linked (GlcNAc...) asparagine; by host glycan.

The protein belongs to the type II cytokine receptor family. As to quaternary structure, homodimer. Interacts with host IFNG.

It localises to the secreted. Functionally, counteracts the antiviral effects of host IFN-gamma. Acts as a soluble IFN-gamma receptor and thus inhibits the interaction between host IFN-gamma and its receptor. The polypeptide is Soluble interferon gamma receptor OPG193 (OPG193) (Cynomys gunnisoni (Gunnison's prairie dog)).